Here is a 469-residue protein sequence, read N- to C-terminus: Adenosylhomocysteinase (469 aa).

The substrate site is built by T60, D135, and E195. 196 to 198 lines the NAD(+) pocket; the sequence is TTT. 2 residues coordinate substrate: K225 and D229. NAD(+)-binding positions include N230, 259–264, E282, N317, 338–340, and N383; these read GYGDVG and IGH.

The protein belongs to the adenosylhomocysteinase family. It depends on NAD(+) as a cofactor.

The protein localises to the cytoplasm. It catalyses the reaction S-adenosyl-L-homocysteine + H2O = L-homocysteine + adenosine. Its pathway is amino-acid biosynthesis; L-homocysteine biosynthesis; L-homocysteine from S-adenosyl-L-homocysteine: step 1/1. In terms of biological role, may play a key role in the regulation of the intracellular concentration of adenosylhomocysteine. In Hyphomonas neptunium (strain ATCC 15444), this protein is Adenosylhomocysteinase.